The sequence spans 78 residues: Large ribosomal subunit protein bL31 (78 aa).

Residues Cys-16, Cys-18, Cys-38, and Cys-41 each coordinate Zn(2+).

This sequence belongs to the bacterial ribosomal protein bL31 family. Type A subfamily. As to quaternary structure, part of the 50S ribosomal subunit. Zn(2+) is required as a cofactor.

Binds the 23S rRNA. In Frankia casuarinae (strain DSM 45818 / CECT 9043 / HFP020203 / CcI3), this protein is Large ribosomal subunit protein bL31.